A 342-amino-acid polypeptide reads, in one-letter code: Sesquiterpene synthase MBR_09977 (342 aa).

Residues Asp-91 and Asp-96 each coordinate Mg(2+). Residues 91–96 carry the DDXXXD motif motif; sequence DDLFVD. Position 184 (Arg-184) interacts with substrate. Mg(2+)-binding residues include Asn-230, Ser-234, and Glu-238.

The protein belongs to the terpene synthase family. The cofactor is Mg(2+).

The catalysed reaction is (2E,6E)-farnesyl diphosphate + H2O = (+)-corvol ether B + diphosphate. It carries out the reaction (2E,6E)-farnesyl diphosphate + H2O = (+)-corvol ether A + diphosphate. Functionally, terpene synthase that catalyzes the conversion of (2E,6E)-farnesyl diphosphate (FPP) into sesquiterpenes which are important for fungi-environment interactions. Produces a mixture consisting of 8 sesquiterpenes including corvol ethers A and B, as well as traces of epizonarene, gamma-cadinene, delta-cadinene, alpha-cadinene, alpha-cadinol, and an unidentified sesquiterpene. The major product is corvol ether A. The chain is Sesquiterpene synthase MBR_09977 from Metarhizium brunneum (strain ARSEF 3297).